Here is a 297-residue protein sequence, read N- to C-terminus: Phosphatidylserine decarboxylase proenzyme (297 aa).

Residues D100, H157, and S263 each act as charge relay system; for autoendoproteolytic cleavage activity in the active site. The active-site Schiff-base intermediate with substrate; via pyruvic acid; for decarboxylase activity is the S263. S263 is subject to Pyruvic acid (Ser); by autocatalysis.

This sequence belongs to the phosphatidylserine decarboxylase family. PSD-B subfamily. Prokaryotic type I sub-subfamily. Heterodimer of a large membrane-associated beta subunit and a small pyruvoyl-containing alpha subunit. Requires pyruvate as cofactor. Post-translationally, is synthesized initially as an inactive proenzyme. Formation of the active enzyme involves a self-maturation process in which the active site pyruvoyl group is generated from an internal serine residue via an autocatalytic post-translational modification. Two non-identical subunits are generated from the proenzyme in this reaction, and the pyruvate is formed at the N-terminus of the alpha chain, which is derived from the carboxyl end of the proenzyme. The autoendoproteolytic cleavage occurs by a canonical serine protease mechanism, in which the side chain hydroxyl group of the serine supplies its oxygen atom to form the C-terminus of the beta chain, while the remainder of the serine residue undergoes an oxidative deamination to produce ammonia and the pyruvoyl prosthetic group on the alpha chain. During this reaction, the Ser that is part of the protease active site of the proenzyme becomes the pyruvoyl prosthetic group, which constitutes an essential element of the active site of the mature decarboxylase.

The protein localises to the cell membrane. It catalyses the reaction a 1,2-diacyl-sn-glycero-3-phospho-L-serine + H(+) = a 1,2-diacyl-sn-glycero-3-phosphoethanolamine + CO2. Its pathway is phospholipid metabolism; phosphatidylethanolamine biosynthesis; phosphatidylethanolamine from CDP-diacylglycerol: step 2/2. In terms of biological role, catalyzes the formation of phosphatidylethanolamine (PtdEtn) from phosphatidylserine (PtdSer). This Glaesserella parasuis serovar 5 (strain SH0165) (Haemophilus parasuis) protein is Phosphatidylserine decarboxylase proenzyme.